A 1220-amino-acid chain; its full sequence is Eukaryotic translation initiation factor 5B (1220 aa).

Disordered regions lie at residues 1–417 and 430–608; these read MGKK…EARA and GVEV…AYDK. Positions 7 to 16 are enriched in basic and acidic residues; it reads NKSEDSTKDD. Positions 20–32 are enriched in low complexity; the sequence is DALAAEIEGAGAA. Serine 66 carries the post-translational modification Phosphoserine. Positions 95–105 are enriched in basic residues; sequence DKKKKGQKGKK. Residues serine 107 and serine 113 each carry the phosphoserine modification. Residues 109 to 118 show a composition bias toward acidic residues; that stretch reads DDNDSEELED. Position 134 is a phosphotyrosine (tyrosine 134). Residues serine 135 and serine 137 each carry the phosphoserine modification. A compositionally biased stretch (basic residues) spans 146–158; sequence LPKKAKGKAQKSN. Phosphoserine is present on residues serine 164, serine 171, serine 182, serine 183, serine 186, serine 190, serine 214, and serine 222. Over residues 170–179 the composition is skewed to basic and acidic residues; that stretch reads NSKKIKERSR. Basic and acidic residues predominate over residues 231–282; that stretch reads KKAEKKERERKKRDEEKAKLRKLKEKEESETGKKDQSKQKESQRKSEEETVK. The residue at position 301 (threonine 301) is a Phosphothreonine. Basic and acidic residues-rich tracts occupy residues 323 to 334, 349 to 417, and 434 to 449; these read GEKEEKEKEKKK, AKLK…EARA, and PSKD…YEDK. Phosphoserine is present on serine 438. Acidic residues-rich tracts occupy residues 491–516 and 531–569; these read EPEE…EETE and PEEE…DEKV. The residue at position 498 (threonine 498) is a Phosphothreonine. Residues serine 547, serine 557, serine 560, serine 588, serine 589, serine 591, and serine 595 each carry the phosphoserine modification. Basic and acidic residues predominate over residues 570 to 588; the sequence is SDEKDSGKTLDKKPSKEMS. Positions 598–608 are enriched in basic and acidic residues; the sequence is DRTKEERAYDK. Residues 629 to 846 enclose the tr-type G domain; that stretch reads LRAPIICVLG…LLVELTQTML (218 aa). A G1 region spans residues 638 to 645; it reads GHVDTGKT. GTP-binding positions include 640-646 and 663-665; these read VDTGKTK and GIT. Positions 663 to 667 are G2; the sequence is GITQQ. The segment at 702-705 is G3; it reads DTPG. Residue histidine 706 is part of the active site. Residues 756–757, 759–760, and 825–826 each bind GTP; these read NK, DR, and AH. The G4 stretch occupies residues 756 to 759; that stretch reads NKID. Residues 824-826 are G5; it reads SAH. A Phosphoserine modification is found at serine 1168.

It belongs to the TRAFAC class translation factor GTPase superfamily. Classic translation factor GTPase family. IF-2 subfamily. As to quaternary structure, interacts through its C-terminal domain (CTD) with the CTD of eIF1A (EIF1AX) or with the CTD of EIF5 (mutually exclusive) through a common binding site. Interacts with eIF1A (EIF1AX) from the location of the start codon by the 43S complex until the formation of the 80S complex. Interacts with ANXA5 in a calcium and phospholipid-dependent manner. It depends on a monovalent cation as a cofactor.

It is found in the cytoplasm. It catalyses the reaction GTP + H2O = GDP + phosphate + H(+). Functionally, plays a role in translation initiation. Ribosome-dependent GTPase that promotes the joining of the 60S ribosomal subunit to the pre-initiation complex to form the 80S initiation complex with the initiator methionine-tRNA in the P-site base paired to the start codon. Together with eIF1A (EIF1AX), actively orients the initiator methionine-tRNA in a conformation that allows 60S ribosomal subunit joining to form the 80S initiation complex. Is released after formation of the 80S initiation complex. Its GTPase activity is not essential for ribosomal subunits joining, but GTP hydrolysis is needed for eIF1A (EIF1AX) ejection quickly followed by EIF5B release to form elongation-competent ribosomes. In contrast to its procaryotic homolog, does not promote recruitment of Met-rRNA to the small ribosomal subunit. This Pongo abelii (Sumatran orangutan) protein is Eukaryotic translation initiation factor 5B (EIF5B).